Consider the following 269-residue polypeptide: Thiazole synthase (269 aa).

Residue lysine 109 is the Schiff-base intermediate with DXP of the active site. Residues glycine 170, 196–197, and 218–219 each bind 1-deoxy-D-xylulose 5-phosphate; these read AG and NT.

It belongs to the ThiG family. Homotetramer. Forms heterodimers with either ThiH or ThiS.

The protein localises to the plastid. It localises to the chloroplast. It catalyses the reaction [ThiS sulfur-carrier protein]-C-terminal-Gly-aminoethanethioate + 2-iminoacetate + 1-deoxy-D-xylulose 5-phosphate = [ThiS sulfur-carrier protein]-C-terminal Gly-Gly + 2-[(2R,5Z)-2-carboxy-4-methylthiazol-5(2H)-ylidene]ethyl phosphate + 2 H2O + H(+). The protein operates within cofactor biosynthesis; thiamine diphosphate biosynthesis. In terms of biological role, catalyzes the rearrangement of 1-deoxy-D-xylulose 5-phosphate (DXP) to produce the thiazole phosphate moiety of thiamine. Sulfur is provided by the thiocarboxylate moiety of the carrier protein ThiS. In vitro, sulfur can be provided by H(2)S. In Phaeodactylum tricornutum (strain CCAP 1055/1), this protein is Thiazole synthase.